The chain runs to 320 residues: Aspartate carbamoyltransferase catalytic subunit (320 aa).

Arg57 and Thr58 together coordinate carbamoyl phosphate. Residue Lys85 coordinates L-aspartate. Carbamoyl phosphate is bound by residues Arg107, His141, and Gln144. Arg174 and Arg228 together coordinate L-aspartate. Carbamoyl phosphate is bound by residues Gly269 and Pro270.

The protein belongs to the aspartate/ornithine carbamoyltransferase superfamily. ATCase family. Heterododecamer (2C3:3R2) of six catalytic PyrB chains organized as two trimers (C3), and six regulatory PyrI chains organized as three dimers (R2).

It carries out the reaction carbamoyl phosphate + L-aspartate = N-carbamoyl-L-aspartate + phosphate + H(+). The protein operates within pyrimidine metabolism; UMP biosynthesis via de novo pathway; (S)-dihydroorotate from bicarbonate: step 2/3. Catalyzes the condensation of carbamoyl phosphate and aspartate to form carbamoyl aspartate and inorganic phosphate, the committed step in the de novo pyrimidine nucleotide biosynthesis pathway. This chain is Aspartate carbamoyltransferase catalytic subunit, found in Mycobacterium ulcerans (strain Agy99).